Here is a 467-residue protein sequence, read N- to C-terminus: Cysteine protease ATG4a (467 aa).

A disordered region spans residues Met-1–Asp-35. Cys-170 functions as the Nucleophile in the catalytic mechanism. Catalysis depends on residues Asp-364 and His-366. A disordered region spans residues Asn-448 to Leu-467. Positions Ala-452–Leu-467 are enriched in acidic residues.

The protein belongs to the peptidase C54 family. In terms of assembly, interacts with ATG8. In terms of tissue distribution, constitutively expressed.

It localises to the cytoplasm. It carries out the reaction [protein]-C-terminal L-amino acid-glycyl-phosphatidylethanolamide + H2O = [protein]-C-terminal L-amino acid-glycine + a 1,2-diacyl-sn-glycero-3-phosphoethanolamine. In terms of biological role, cysteine protease that plays a key role in autophagy by mediating both proteolytic activation and delipidation of ATG8 family proteins. The protease activity is required for proteolytic activation of ATG8 family proteins: cleaves the C-terminal amino acid of ATG8 proteins to reveal a C-terminal glycine. Exposure of the glycine at the C-terminus is essential for ATG8 proteins conjugation to phosphatidylethanolamine (PE) and insertion to membranes, which is necessary for autophagy. In addition to the protease activity, also mediates delipidation of PE-conjugated ATG8 proteins. This is Cysteine protease ATG4a from Arabidopsis thaliana (Mouse-ear cress).